A 421-amino-acid chain; its full sequence is UDP-N-acetylglucosamine 1-carboxyvinyltransferase (421 aa).

22–23 contributes to the phosphoenolpyruvate binding site; that stretch reads KN. Arg-93 is a binding site for UDP-N-acetyl-alpha-D-glucosamine. Cys-117 (proton donor) is an active-site residue. Residue Cys-117 is modified to 2-(S-cysteinyl)pyruvic acid O-phosphothioketal. Residues 122–126, Asp-308, and Ile-330 each bind UDP-N-acetyl-alpha-D-glucosamine; that span reads RPVDL.

The protein belongs to the EPSP synthase family. MurA subfamily.

The protein localises to the cytoplasm. The catalysed reaction is phosphoenolpyruvate + UDP-N-acetyl-alpha-D-glucosamine = UDP-N-acetyl-3-O-(1-carboxyvinyl)-alpha-D-glucosamine + phosphate. Its pathway is cell wall biogenesis; peptidoglycan biosynthesis. Functionally, cell wall formation. Adds enolpyruvyl to UDP-N-acetylglucosamine. This chain is UDP-N-acetylglucosamine 1-carboxyvinyltransferase, found in Pseudomonas entomophila (strain L48).